A 635-amino-acid chain; its full sequence is Putative adagio-like protein 2 (635 aa).

A compositionally biased stretch (acidic residues) spans 1–25 (MEWDSDSEGSGDEEEEEEEEEEEGV). The tract at residues 1 to 32 (MEWDSDSEGSGDEEEEEEEEEEEGVEVGGGGD) is disordered. Residues 44–123 (ALAIEGVLGA…TDIRRCLEEG (80 aa)) form the PAS domain. Cysteine 91 carries the post-translational modification S-4a-FMN cysteine. An F-box domain is found at 209–255 (SDLFLLSDEVLCQKILSRLSPRDIASVNSVCKRLYHLTRNDDLWRMV). Kelch repeat units follow at residues 371–421 (RLVL…TLDG), 423–474 (KLVV…VYDG), 476–530 (KILM…PPPR), and 542–594 (RILI…VVGG).

The protein belongs to the ADAGIO family. FMN binds covalently to cysteine after exposure to blue light and is reversed in the dark.

It localises to the nucleus. It participates in protein modification; protein ubiquitination. Functionally, component of an E3 ubiquitin ligase complex that plays a central role in blue light-dependent circadian cycles. Acts as a blue light photoreceptor, due to the presence of FMN, that mediates light-regulated protein degradation of critical clock components by targeting them to the proteasome complex. In Oryza sativa subsp. japonica (Rice), this protein is Putative adagio-like protein 2.